The primary structure comprises 462 residues: Citrate synthase, mitochondrial (462 aa).

The N-terminal 21 residues, 1–21, are a transit peptide targeting the mitochondrion; sequence MRSINQLLKQASLSQKSQYNF. Catalysis depends on residues His300, His346, and Asp401.

This sequence belongs to the citrate synthase family. As to quaternary structure, homodimer.

The protein resides in the mitochondrion matrix. It localises to the cytoplasm. It is found in the cytoskeleton. It carries out the reaction oxaloacetate + acetyl-CoA + H2O = citrate + CoA + H(+). It participates in carbohydrate metabolism; tricarboxylic acid cycle; isocitrate from oxaloacetate: step 1/2. Functionally, structural protein involved in oral morphogenesis and in pronuclear behavior during conjugation. Respiratory enzyme. This is Citrate synthase, mitochondrial from Tetrahymena thermophila.